Consider the following 434-residue polypeptide: MSIQKIHAREILDSRGEPTVEVDLHTAKGHFRAAVPSGASTGIHEALEPRDGDKKRFLGKGVLKAVEHINKTIGPALIEKKISVVEQEKIDKVMIEMDGTENKSKFGANAILGVSLAVCKAGAAEKGVPLYRHIADLAGNTELILPVPAFNVINGGSHAGNKLAMQEFMVLPVGAASFHDAMRVGAEVYHSLKGVIKAKYGKDATNVGGEGGFAPNILDNHEALELLKAAIAQAGYTDKVVIGMDVAASEFCRDGRYHLDFKSPPHTKRYITGEQLGEIYRGFIKDYPVVSIEDPFDQDDWEAWKRFVFHVDIQVVGDDLTVTNPKRIAHGAEQHACNCLLLKVNQIGSVTESIQACKLAQSHGWGVMVSHRSGETEDTFIADLVVGLCTGQIKTGAPCRSERLAKYNQLMRIEEALGDKAKFAGRKFRNPKAK.

Ser2 carries the post-translational modification N-acetylserine. Substrate is bound by residues His158 and Glu167. Catalysis depends on Glu210, which acts as the Proton donor. Mg(2+) is bound by residues Asp245, Glu293, and Asp318. Residues Glu293 and Asp318 each coordinate substrate. The active-site Proton acceptor is Lys343. Residues 370–373 (SHRS) and Lys394 each bind substrate.

The protein belongs to the enolase family. In terms of assembly, homodimer. Interacts with PNKD. Requires Mg(2+) as cofactor.

It localises to the cytoplasm. The catalysed reaction is (2R)-2-phosphoglycerate = phosphoenolpyruvate + H2O. Its pathway is carbohydrate degradation; glycolysis; pyruvate from D-glyceraldehyde 3-phosphate: step 4/5. Its function is as follows. Glycolytic enzyme that catalyzes the conversion of 2-phosphoglycerate to phosphoenolpyruvate. This chain is Beta-enolase (ENO3), found in Gallus gallus (Chicken).